Reading from the N-terminus, the 215-residue chain is MVSALRGAPLIRVHSSPVSSPSVSGPRRLVSCLSSQSSALSQSGGGSTSAAGIEARSRALRRRWCPAGIMLLALVCLLSCLLPSSEAKLYGRCELARVLHDFGLDGYRGYSLADWVCLAYFTSGFNAAALDYEADGSTNNGIFQINSRRWCSNLTPNVPNVCRMYCSDLLNPNLKDTVICAMKITQEPQGLGYWEAWRHHCQGKDLTEWVDGCDF.

The Cytoplasmic segment spans residues methionine 1–arginine 63. The helical; Signal-anchor for type II membrane protein transmembrane segment at tryptophan 64 to serine 84 threads the bilayer. Over serine 85–phenylalanine 215 the chain is Extracellular. The region spanning lysine 88–phenylalanine 215 is the C-type lysozyme domain. Disulfide bonds link cysteine 93-cysteine 213, cysteine 117-cysteine 201, cysteine 151-cysteine 166, and cysteine 162-cysteine 180.

This sequence belongs to the glycosyl hydrolase 22 family. Interacts with ASTL. The processed form derives from the membrane form by proteolytic processing. In terms of tissue distribution, the processed form is expressed in sperm (at protein level). Expressed in testis, epididymis and placenta.

It is found in the cytoplasmic vesicle. The protein resides in the secretory vesicle. The protein localises to the acrosome membrane. It localises to the secreted. Its function is as follows. Sperm surface membrane protein that may be involved in sperm-egg plasma membrane adhesion and fusion during fertilization. It could be a potential receptor for the egg oligosaccharide residue N-acetylglucosamine, which is present in the extracellular matrix over the egg plasma membrane. The processed form has no detectable bacteriolytic activity in vitro. This Homo sapiens (Human) protein is Sperm acrosome membrane-associated protein 3 (SPACA3).